A 624-amino-acid chain; its full sequence is Chitin elicitor receptor kinase 1 (624 aa).

The first 18 residues, 1 to 18, serve as a signal peptide directing secretion; it reads MEASTSLLVLVLAAAAFA. Topologically, residues 19–240 are extracellular; sequence AGTVTEAAGD…SPGKGASAGA (222 aa). Disulfide bonds link Cys30-Cys93, Cys34-Cys160, and Cys91-Cys158. Residue Asn48 is glycosylated (N-linked (GlcNAc...) asparagine). 115–121 contacts chitin; sequence RGQIYTS. An N-linked (GlcNAc...) asparagine glycan is attached at Asn128. Chitin is bound at residue 142-148; it reads PANNIPD. N-linked (GlcNAc...) asparagine glycans are attached at residues Asn153 and Asn157. One can recognise a LysM domain in the interval 173–218; that stretch reads LTYPLRAEDTLASVAATYGLSSQLDVVRRYNPGMESATGSGIVYIP. Asn223 carries N-linked (GlcNAc...) asparagine glycosylation. Residues 241-261 form a helical membrane-spanning segment; that stretch reads IAGGVVAGVVVLAAIFLYIIF. The Cytoplasmic portion of the chain corresponds to 262 to 624; the sequence is YRRRKAKQAT…QGLVNLMSGR (363 aa). Positions 324-599 constitute a Protein kinase domain; that stretch reads FSIGNKIGQG…RSVVVALMTL (276 aa). ATP is bound by residues 330-338 and Lys351; that span reads IGQGGFGAV. Asp443 functions as the Proton acceptor in the catalytic mechanism.

This sequence belongs to the protein kinase superfamily. Ser/Thr protein kinase family. In terms of assembly, homooligomer. Interacts with CEBIP. Interacts with LYP4 and LYP6. Interacts with RLCK176. Autophosphorylated; induced by chitin and derivatives. In terms of tissue distribution, expressed in seedlings, roots, shoots and stems, and, to a lower extent, in flowers.

The protein localises to the cell membrane. The catalysed reaction is L-seryl-[protein] + ATP = O-phospho-L-seryl-[protein] + ADP + H(+). It carries out the reaction L-threonyl-[protein] + ATP = O-phospho-L-threonyl-[protein] + ADP + H(+). Its function is as follows. Lysin motif (LysM) receptor kinase required as a cell surface receptor for chitin elicitor (chitooligosaccharides) signaling leading to innate immunity in response to biotic stresses. Involved in the resistance to pathogenic fungi, probably by sensing microbe-associated molecular patterns (MAMP) and pathogen-associated molecular patterns (PAMP). Involved in the detection of microbial peptidoglycans (PGNs) and mediates PGN response. Plays dual roles in PGN and chitin signaling during innate immunity. Acts as an adapter for LYP4 and LYP6 and mediates signal transduction from the extracellular to intracellular spaces. Participates in the activation of defense genes during response to PGN and chitin. Phosphorylates the downstream partner RLCK185 in response to chitin elicitation. In Oryza sativa subsp. japonica (Rice), this protein is Chitin elicitor receptor kinase 1.